The sequence spans 197 residues: Protein jagunal (197 aa).

Residues 1–39 (MATRGGPMVAGTDGNDFEFRQRVAGTYQISLLNKSRLKY) are Cytoplasmic-facing. The chain crosses the membrane as a helical span at residues 40–60 (CIFFHALLFFVMLAKLTSDIL). Over 61 to 78 (DRLDIFVLEIEELEVPSP) the chain is Lumenal. Residues 79–99 (LWWEYVWAGSLLTSFLGLSAA) traverse the membrane as a helical segment. At 100 to 109 (RGNKVREMQK) the chain is on the cytoplasmic side. The chain crosses the membrane as a helical span at residues 110–130 (YMIAILVFAILPLLYCFAYYF). The Lumenal segment spans residues 131 to 159 (SDVWEFATMDKSVELDETDIFIWRGYPYG). A helical transmembrane segment spans residues 160 to 180 (VFWYAFCFVGFQVHGFTLYFA). Over 181 to 197 (YNLVKVWKARTATRKFQ) the chain is Cytoplasmic.

This sequence belongs to the jagunal family.

Its subcellular location is the endoplasmic reticulum membrane. Functionally, required for endoplasmic reticulum organization and proper vesicular traffic during vitellogenesis. Required for oocyte and bristle growth. The sequence is that of Protein jagunal from Drosophila pseudoobscura pseudoobscura (Fruit fly).